A 104-amino-acid chain; its full sequence is Large ribosomal subunit protein uL23 (104 aa).

It belongs to the universal ribosomal protein uL23 family. In terms of assembly, part of the 50S ribosomal subunit. Contacts protein L29, and trigger factor when it is bound to the ribosome.

Its function is as follows. One of the early assembly proteins it binds 23S rRNA. One of the proteins that surrounds the polypeptide exit tunnel on the outside of the ribosome. Forms the main docking site for trigger factor binding to the ribosome. In Nostoc sp. (strain PCC 7120 / SAG 25.82 / UTEX 2576), this protein is Large ribosomal subunit protein uL23.